We begin with the raw amino-acid sequence, 304 residues long: Type II methyltransferase M.ScaI (304 aa).

The protein belongs to the N(4)/N(6)-methyltransferase family. N(4) subfamily.

It catalyses the reaction a 2'-deoxycytidine in DNA + S-adenosyl-L-methionine = an N(4)-methyl-2'-deoxycytidine in DNA + S-adenosyl-L-homocysteine + H(+). A methylase that recognizes the double-stranded sequence 5'-AGTACT-3', methylates C-5 on both strands, and protects the DNA from cleavage by the ScaI endonuclease. The polypeptide is Type II methyltransferase M.ScaI (Streptomyces caespitosus).